A 114-amino-acid polypeptide reads, in one-letter code: Phosphoribosyl-ATP pyrophosphatase (114 aa).

It belongs to the PRA-PH family.

The protein localises to the cytoplasm. It carries out the reaction 1-(5-phospho-beta-D-ribosyl)-ATP + H2O = 1-(5-phospho-beta-D-ribosyl)-5'-AMP + diphosphate + H(+). It participates in amino-acid biosynthesis; L-histidine biosynthesis; L-histidine from 5-phospho-alpha-D-ribose 1-diphosphate: step 2/9. The chain is Phosphoribosyl-ATP pyrophosphatase from Leuconostoc mesenteroides subsp. mesenteroides (strain ATCC 8293 / DSM 20343 / BCRC 11652 / CCM 1803 / JCM 6124 / NCDO 523 / NBRC 100496 / NCIMB 8023 / NCTC 12954 / NRRL B-1118 / 37Y).